The chain runs to 317 residues: Proline-rich protein 2 (317 aa).

An N-terminal signal peptide occupies residues 1 to 16; sequence MLVVLFTVALLALSSA. Residues 15 to 317 are disordered; that stretch reads SAQGPREELQ…PPQGRPQGPQ (303 aa). Positions 32–44 are enriched in pro residues; the sequence is QRPPPSGSQPRPP. An N-linked (GlcNAc...) asparagine glycan is attached at Asn-46. 2 stretches are compositionally biased toward pro residues: residues 51–183 and 204–288; these read GPPP…PPAG and QSPP…PTQG. A compositionally biased stretch (low complexity) spans 289–305; it reads PHPTGGPQQTPPLAGNP. The span at 306–317 shows a compositional bias: pro residues; sequence QGPPQGRPQGPQ.

It localises to the secreted. The polypeptide is Proline-rich protein 2 (Prp2) (Mus musculus (Mouse)).